Consider the following 214-residue polypeptide: Nodulation protein A (214 aa).

Belongs to the NodA family.

Its subcellular location is the cytoplasm. In terms of biological role, N-acyltransferase required for nodulation. Acts in the production of a small, heat-stable compound (Nod) that stimulates mitosis in various plant protoplasts. The chain is Nodulation protein A from Methylobacterium nodulans (strain LMG 21967 / CNCM I-2342 / ORS 2060).